A 297-amino-acid chain; its full sequence is N-acetylmuramic acid 6-phosphate etherase (297 aa).

In terms of domain architecture, SIS spans 55–218; sequence AAAALKSGGR…STGAMVKFGK (164 aa). Catalysis depends on glutamate 83, which acts as the Proton donor. Glutamate 114 is an active-site residue.

This sequence belongs to the GCKR-like family. MurNAc-6-P etherase subfamily. In terms of assembly, homodimer.

The enzyme catalyses N-acetyl-D-muramate 6-phosphate + H2O = N-acetyl-D-glucosamine 6-phosphate + (R)-lactate. It functions in the pathway amino-sugar metabolism; 1,6-anhydro-N-acetylmuramate degradation. The protein operates within amino-sugar metabolism; N-acetylmuramate degradation. Its pathway is cell wall biogenesis; peptidoglycan recycling. In terms of biological role, specifically catalyzes the cleavage of the D-lactyl ether substituent of MurNAc 6-phosphate, producing GlcNAc 6-phosphate and D-lactate. Together with AnmK, is also required for the utilization of anhydro-N-acetylmuramic acid (anhMurNAc) either imported from the medium or derived from its own cell wall murein, and thus plays a role in cell wall recycling. The chain is N-acetylmuramic acid 6-phosphate etherase from Salmonella paratyphi B (strain ATCC BAA-1250 / SPB7).